The chain runs to 454 residues: Kynurenine 3-monooxygenase (454 aa).

This sequence belongs to the aromatic-ring hydroxylase family. KMO subfamily. FAD serves as cofactor.

It carries out the reaction L-kynurenine + NADPH + O2 + H(+) = 3-hydroxy-L-kynurenine + NADP(+) + H2O. It functions in the pathway cofactor biosynthesis; NAD(+) biosynthesis; quinolinate from L-kynurenine: step 1/3. In terms of biological role, catalyzes the hydroxylation of L-kynurenine (L-Kyn) to form 3-hydroxy-L-kynurenine (L-3OHKyn). Required for synthesis of quinolinic acid. The protein is Kynurenine 3-monooxygenase of Salinispora arenicola (strain CNS-205).